We begin with the raw amino-acid sequence, 337 residues long: Methionyl-tRNA formyltransferase (337 aa).

Residue serine 116–proline 119 coordinates (6S)-5,6,7,8-tetrahydrofolate.

The protein belongs to the Fmt family.

It carries out the reaction L-methionyl-tRNA(fMet) + (6R)-10-formyltetrahydrofolate = N-formyl-L-methionyl-tRNA(fMet) + (6S)-5,6,7,8-tetrahydrofolate + H(+). In terms of biological role, attaches a formyl group to the free amino group of methionyl-tRNA(fMet). The formyl group appears to play a dual role in the initiator identity of N-formylmethionyl-tRNA by promoting its recognition by IF2 and preventing the misappropriation of this tRNA by the elongation apparatus. This chain is Methionyl-tRNA formyltransferase, found in Desulfovibrio desulfuricans (strain ATCC 27774 / DSM 6949 / MB).